A 243-amino-acid polypeptide reads, in one-letter code: Probable transcriptional regulator ycf27 (243 aa).

In terms of domain architecture, Response regulatory spans 7–120; it reads KILVVDDEAS…ELEARIRSVL (114 aa). Aspartate 56 carries the post-translational modification 4-aspartylphosphate. A DNA-binding region (H-T-H motif) is located at residues 76–94; it reads DVPIIMLTALGEVCDRITG. A DNA-binding region (ompR/PhoB-type) is located at residues 135-236; the sequence is SGIISIGFLK…ARGTGYLFQR (102 aa).

It is found in the plastid. It localises to the chloroplast. Functionally, probable promoter-specific protein mediating the interaction between DNA and RNA polymerase. This is Probable transcriptional regulator ycf27 (ycf27) from Porphyra purpurea (Red seaweed).